Consider the following 182-residue polypeptide: Adenine phosphoribosyltransferase (182 aa).

It belongs to the purine/pyrimidine phosphoribosyltransferase family. As to quaternary structure, homodimer.

The protein resides in the cytoplasm. It catalyses the reaction AMP + diphosphate = 5-phospho-alpha-D-ribose 1-diphosphate + adenine. Its pathway is purine metabolism; AMP biosynthesis via salvage pathway; AMP from adenine: step 1/1. Catalyzes a salvage reaction resulting in the formation of AMP, that is energically less costly than de novo synthesis. In Bordetella avium (strain 197N), this protein is Adenine phosphoribosyltransferase.